Reading from the N-terminus, the 376-residue chain is Cytochrome b (376 aa).

Transmembrane regions (helical) follow at residues 28-48, 72-94, 107-127, and 169-189; these read YGFLLGIIFFIQILTGVFLAS, WCFRYMHATGASLVFFLTYLHIL, SWISGLIIFALFIVTAFIGYV, and FFVLHFILPFVALCIVFIHIF. Residues histidine 78 and histidine 92 each contribute to the heme b site. Heme b contacts are provided by histidine 173 and histidine 187. Histidine 192 is a binding site for a ubiquinone. 4 consecutive transmembrane segments (helical) span residues 214-234, 274-294, 317-337, and 340-360; these read LLSLDVKGFNNILILFLIQSI, IPSKNAGLVIVVASLQLLFLL, VPIIWFMCSFYALLWIGCQLP, and IFILYGRLFIILFFSSGLFAL.

The protein belongs to the cytochrome b family. In terms of assembly, the main subunits of complex b-c1 are: cytochrome b, cytochrome c1 and the Rieske protein. Requires heme b as cofactor.

The protein resides in the mitochondrion inner membrane. Functionally, component of the ubiquinol-cytochrome c reductase complex (complex III or cytochrome b-c1 complex) that is part of the mitochondrial respiratory chain. The b-c1 complex mediates electron transfer from ubiquinol to cytochrome c. Contributes to the generation of a proton gradient across the mitochondrial membrane that is then used for ATP synthesis. This is Cytochrome b (MT-CYB) from Plasmodium chabaudi.